Reading from the N-terminus, the 574-residue chain is Sulfate adenylyltransferase (574 aa).

Residues 1 to 169 (MANPPHGGVL…IEAINKLNHY (169 aa)) are N-terminal. The tract at residues 170-394 (DYVALRYTPA…LRESSPPRHT (225 aa)) is catalytic. Gln-197 contributes to the sulfate binding site. ATP contacts are provided by residues 197–200 (QTRN) and 291–294 (GRDH). Catalysis depends on residues Thr-198, Arg-199, and Asn-200. Arg-199 contacts sulfate. Ala-295 lines the sulfate pocket. An ATP-binding site is contributed by Val-333. The segment at 395–574 (QGFTIFLTGY…LETEGFFDRS (180 aa)) is allosteric regulation domain; adenylyl-sulfate kinase-like. 3'-phosphoadenylyl sulfate is bound by residues 434-437 (DTVR), Arg-451, 477-478 (IA), and Arg-516.

This sequence in the N-terminal section; belongs to the sulfate adenylyltransferase family. The protein in the C-terminal section; belongs to the APS kinase family. Homohexamer. Dimer of trimers.

It is found in the cytoplasm. The enzyme catalyses sulfate + ATP + H(+) = adenosine 5'-phosphosulfate + diphosphate. The protein operates within sulfur metabolism; hydrogen sulfide biosynthesis; sulfite from sulfate: step 1/3. Its activity is regulated as follows. Allosterically inhibited by 3'-phosphoadenosine 5'-phosphosulfate (PAPS). Functionally, catalyzes the first intracellular reaction of sulfate assimilation, forming adenosine-5'-phosphosulfate (APS) from inorganic sulfate and ATP. Plays an important role in sulfate activation as a component of the biosynthesis pathway of sulfur-containing amino acids. The protein is Sulfate adenylyltransferase of Neosartorya fischeri (strain ATCC 1020 / DSM 3700 / CBS 544.65 / FGSC A1164 / JCM 1740 / NRRL 181 / WB 181) (Aspergillus fischerianus).